A 438-amino-acid chain; its full sequence is Trigger factor (438 aa).

One can recognise a PPIase FKBP-type domain in the interval 162-247 (GDIVTIDFEG…VKDIKVKELP (86 aa)).

This sequence belongs to the FKBP-type PPIase family. Tig subfamily.

It is found in the cytoplasm. It catalyses the reaction [protein]-peptidylproline (omega=180) = [protein]-peptidylproline (omega=0). Its function is as follows. Involved in protein export. Acts as a chaperone by maintaining the newly synthesized protein in an open conformation. Functions as a peptidyl-prolyl cis-trans isomerase. This Caldicellulosiruptor bescii (strain ATCC BAA-1888 / DSM 6725 / KCTC 15123 / Z-1320) (Anaerocellum thermophilum) protein is Trigger factor.